Here is a 56-residue protein sequence, read N- to C-terminus: Large ribosomal subunit protein uL30 (56 aa).

The protein belongs to the universal ribosomal protein uL30 family. In terms of assembly, part of the 50S ribosomal subunit.

The chain is Large ribosomal subunit protein uL30 from Nitratidesulfovibrio vulgaris (strain DSM 19637 / Miyazaki F) (Desulfovibrio vulgaris).